We begin with the raw amino-acid sequence, 472 residues long: Cannabinoid receptor 1 (472 aa).

Residues 1–116 (MKSILDGLAD…CFMVLNPSQQ (116 aa)) lie on the Extracellular side of the membrane. The tract at residues 2 to 23 (KSILDGLADTTFRTITTDLLYV) is required for mitochondrial localization. Asparagine 77 and asparagine 83 each carry an N-linked (GlcNAc...) asparagine glycan. Residues 117–142 (LAIAVLSLTLGTFTVLENLLVLCVIL) traverse the membrane as a helical segment. The Cytoplasmic segment spans residues 143–154 (HSRSLRCRPSYH). The chain crosses the membrane as a helical span at residues 155-175 (FIGSLAVADLLGSVIFVYSFI). Residues 176-187 (DFHVFHRKDSRN) lie on the Extracellular side of the membrane. A helical membrane pass occupies residues 188 to 212 (VFLFKLGGVTASFTASVGSLFLTAI). At 213–232 (DRYISIHRPLAYKRIVTRPK) the chain is on the cytoplasmic side. Residues 233-255 (AVVAFCLMWTIAIVIAVLPLLGW) traverse the membrane as a helical segment. Residues 256-273 (NCEKLQSVCSDIFPHIDE) lie on the Extracellular side of the membrane. The helical transmembrane segment at 274–299 (TYLMFWIGVTSVLLLFIVYAYMYILW) threads the bilayer. Topologically, residues 300–344 (KAHSHAVRMIQRGTQKSIIIHTSEDGKVQVTRPDQARMDIRLAKT) are cytoplasmic. Residues 345–365 (LVLILVVLIICWGPLLAIMVY) form a helical membrane-spanning segment. Topologically, residues 366–377 (DVFGKMNKLIKT) are extracellular. The helical transmembrane segment at 378–399 (VFAFCSMLCLLNSTVNPIIYAL) threads the bilayer. Over 400–472 (RSKDLRHAFR…VSTDTSAEAL (73 aa)) the chain is Cytoplasmic. Cysteine 415 is lipidated: S-palmitoyl cysteine. Phosphoserine is present on residues serine 425 and serine 429.

The protein belongs to the G-protein coupled receptor 1 family. Interacts (via C-terminus) with CNRIP1; this interaction attenuates constitutive, but not agonist-dependent, inhibition of voltage-gated Ca(2+) channels in neurons. Associates with G protein alpha subunits, including G(i) alpha-1/GNAI1, G(i) alpha-3/GNAI3 and G(o)-alpha/GNAO1; palmitoylation is important for interaction with GNAI3 and GNAO1. Post-translationally, palmitoylation at Cys-415 is important for recruitment at plasma membrane and lipid rafts and association with G protein alpha subunits. In terms of tissue distribution, widely expressed, with highest levels in fetal and adult brain. Expression levels of isoform 2 and isoform 3 are much lower than those of isoform 1.

It is found in the cell membrane. It localises to the membrane raft. Its subcellular location is the mitochondrion outer membrane. The protein resides in the cell projection. The protein localises to the axon. It is found in the presynapse. Hemopressin, a peptide derived from hemoglobin subunit alpha (HBA1 and/or HBA2), acts as an antagonist peptide: hemopressin-binding efficiently blocks cannabinoid receptor CNR1 and subsequent signaling. Functionally, G-protein coupled receptor for endogenous cannabinoids (eCBs), including N-arachidonoylethanolamide (also called anandamide or AEA) and 2-arachidonoylglycerol (2-AG), as well as phytocannabinoids, such as delta(9)-tetrahydrocannabinol (THC). Mediates many cannabinoid-induced effects, acting, among others, on food intake, memory loss, gastrointestinal motility, catalepsy, ambulatory activity, anxiety, chronic pain. Signaling typically involves reduction in cyclic AMP. In the hypothalamus, may have a dual effect on mitochondrial respiration depending upon the agonist dose and possibly upon the cell type. Increases respiration at low doses, while decreases respiration at high doses. At high doses, CNR1 signal transduction involves G-protein alpha-i protein activation and subsequent inhibition of mitochondrial soluble adenylate cyclase, decrease in cyclic AMP concentration, inhibition of protein kinase A (PKA)-dependent phosphorylation of specific subunits of the mitochondrial electron transport system, including NDUFS2. In the hypothalamus, inhibits leptin-induced reactive oxygen species (ROS) formation and mediates cannabinoid-induced increase in SREBF1 and FASN gene expression. In response to cannabinoids, drives the release of orexigenic beta-endorphin, but not that of melanocyte-stimulating hormone alpha/alpha-MSH, from hypothalamic POMC neurons, hence promoting food intake. In the hippocampus, regulates cellular respiration and energy production in response to cannabinoids. Involved in cannabinoid-dependent depolarization-induced suppression of inhibition (DSI), a process in which depolarization of CA1 postsynaptic pyramidal neurons mobilizes eCBs, which retrogradely activate presynaptic CB1 receptors, transiently decreasing GABAergic inhibitory neurotransmission. Also reduces excitatory synaptic transmission. In superior cervical ganglions and cerebral vascular smooth muscle cells, inhibits voltage-gated Ca(2+) channels in a constitutive, as well as agonist-dependent manner. In cerebral vascular smooth muscle cells, cannabinoid-induced inhibition of voltage-gated Ca(2+) channels leads to vasodilation and decreased vascular tone. Induces leptin production in adipocytes and reduces LRP2-mediated leptin clearance in the kidney, hence participating in hyperleptinemia. In adipose tissue, CNR1 signaling leads to increased expression of SREBF1, ACACA and FASN genes. In the liver, activation by endocannabinoids leads to increased de novo lipogenesis and reduced fatty acid catabolism, associated with increased expression of SREBF1/SREBP-1, GCK, ACACA, ACACB and FASN genes. May also affect de novo cholesterol synthesis and HDL-cholesteryl ether uptake. Peripherally modulates energy metabolism. In high carbohydrate diet-induced obesity, may decrease the expression of mitochondrial dihydrolipoyl dehydrogenase/DLD in striated muscles, as well as that of selected glucose/ pyruvate metabolic enzymes, hence affecting energy expenditure through mitochondrial metabolism. In response to cannabinoid anandamide, elicits a pro-inflammatory response in macrophages, which involves NLRP3 inflammasome activation and IL1B and IL18 secretion. In macrophages infiltrating pancreatic islets, this process may participate in the progression of type-2 diabetes and associated loss of pancreatic beta-cells. In terms of biological role, binds both 2-arachidonoylglycerol (2-AG) and anandamide. Only binds 2-arachidonoylglycerol (2-AG) with high affinity. Contrary to its effect on isoform 1, 2-AG behaves as an inverse agonist on isoform 2 in assays measuring GTP binding to membranes. Its function is as follows. Only binds 2-arachidonoylglycerol (2-AG) with high affinity. Contrary to its effect on isoform 1, 2-AG behaves as an inverse agonist on isoform 3 in assays measuring GTP binding to membranes. This Homo sapiens (Human) protein is Cannabinoid receptor 1 (CNR1).